Reading from the N-terminus, the 232-residue chain is MQFNFITIFPNLIKPYFDDSILSRAIKSSIIKLNFINPRDFSADKHLKVDDYMIAGGAGLLMKAQPVFDAIDSLDSTHIIYLTPAGKKFTQNDAKRLSKFENITFICGRYEGIDERIIEEKVNEVFCIGDFIMTGGELGALCMCDAITRNLNGVLGNPNSLDIESFEYGMLESPSFTKPNVYNGLSVISAFLKGNHGKINALKNNMALCKTRFFRPDLYQKLRSPKKQKEKR.

Residues Gly-108 and 128–133 each bind S-adenosyl-L-methionine; that span reads IGDFIM.

Belongs to the RNA methyltransferase TrmD family. In terms of assembly, homodimer.

It localises to the cytoplasm. The catalysed reaction is guanosine(37) in tRNA + S-adenosyl-L-methionine = N(1)-methylguanosine(37) in tRNA + S-adenosyl-L-homocysteine + H(+). Functionally, specifically methylates guanosine-37 in various tRNAs. The chain is tRNA (guanine-N(1)-)-methyltransferase from Campylobacter fetus subsp. fetus (strain 82-40).